The following is a 629-amino-acid chain: Chaperone protein HtpG (629 aa).

Residues 1 to 343 (MQKQTLSFQA…SSDLPLNVSR (343 aa)) form an a; substrate-binding region. The segment at 344–558 (ELLQESRAVK…DGDMSTQLAR (215 aa)) is b. The tract at residues 559–629 (MLKQAGQTVP…YVRRVNALLV (71 aa)) is c.

It belongs to the heat shock protein 90 family. In terms of assembly, homodimer.

It localises to the cytoplasm. Functionally, molecular chaperone. Has ATPase activity. This is Chaperone protein HtpG from Polaromonas naphthalenivorans (strain CJ2).